The primary structure comprises 707 residues: Integrator complex subunit 13 (707 aa).

A compositionally biased stretch (basic and acidic residues) spans 565–625 (PPEEEERKKR…AEAEVIKDSP (61 aa)). Residues 565-651 (PPEEEERKKR…TGPAEKSKGP (87 aa)) form a disordered region. Residues 567-622 (EEEERKKRGRKREDKEEKAEKPPKENEHEKKWQESERVKSVLDREKEDLAEAEVIK) adopt a coiled-coil conformation. The short motif at 573 to 583 (KRGRKREDKEE) is the Nuclear localization signal (NLS) element. A cleavage module binding motif (CMBM) region spans residues 650-695 (GPMSLLSLWSSRINTANSRKHQEFVGRLNSVNNKAELYQHLKEENG).

The protein belongs to the Integrator subunit 13 family. In terms of assembly, component of the Integrator complex, composed of core subunits INTS1, INTS2, INTS3, INTS4, INTS5, INTS6, INTS7, INTS8, INTS9/RC74, INTS10, INTS11/CPSF3L, INTS12, INTS13, INTS14 and INTS15. The core complex associates with protein phosphatase 2A subunits PPP2CA and PPP2R1A, to form the Integrator-PP2A (INTAC) complex. INTS13 is part of the tail subcomplex, composed of INTS10, INTS13, INTS14 and INTS15.

It is found in the nucleus. It localises to the cytoplasm. In terms of biological role, component of the integrator complex, a multiprotein complex that terminates RNA polymerase II (Pol II) transcription in the promoter-proximal region of genes. The integrator complex provides a quality checkpoint during transcription elongation by driving premature transcription termination of transcripts that are unfavorably configured for transcriptional elongation: the complex terminates transcription by (1) catalyzing dephosphorylation of the C-terminal domain (CTD) of Pol II subunit POLR2A/RPB1 and SUPT5H/SPT5, (2) degrading the exiting nascent RNA transcript via endonuclease activity and (3) promoting the release of Pol II from bound DNA. The integrator complex is also involved in terminating the synthesis of non-coding Pol II transcripts, such as enhancer RNAs (eRNAs), small nuclear RNAs (snRNAs), telomerase RNAs and long non-coding RNAs (lncRNAs). Within the integrator complex, INTS13 is part of the integrator tail module and acts as a platform for the recruitment of transcription factors at promoters. The protein is Integrator complex subunit 13 of Xenopus tropicalis (Western clawed frog).